The primary structure comprises 163 residues: MTVKTLHGPAMVKYLLLSILGLAFLSEAAARKIPKVGHTFFQKPESCPPVPGGSMKLDIGIINENQRVSMSRNIESRSTSPWNYTVTWDPNRYPSEVVQAQCRNLGCINAQGKEDISMNSVPIQQETLVVRRKHQGCSVSFQLEKVLVTVGCTCVTPVIHHVQ.

Positions M1–A30 are cleaved as a signal peptide. Residue N83 is glycosylated (N-linked (GlcNAc...) asparagine). Disulfide bonds link C102–C152 and C107–C154.

It belongs to the IL-17 family. As to quaternary structure, homodimer; disulfide-linked. Heterodimer with IL17A (IL17A-IL17F). Forms complexes with IL17RA and IL17RC receptors with 2:1 binding stoichiometry: two receptor chains for one interleukin molecule. IL17F homodimer forms predominantly complexes with IL17RC homodimer, whereas IL17A-IL17F favors complexes with IL17RA-IL17RC. IL17RA and IL17RC chains cannot distinguish between IL17A and IL17F molecules, potentially enabling the formation of topologically distinct complexes. Expressed in T-helper 1 and T-helper 2 cells, basophils and mast cells.

It is found in the secreted. Its function is as follows. Effector cytokine of innate and adaptive immune system involved in antimicrobial host defense and maintenance of tissue integrity. IL17A-IL17F signals via IL17RA-IL17RC heterodimeric receptor complex, triggering homotypic interaction of IL17RA and IL17RC chains with TRAF3IP2 adapter through SEFIR domains. This leads to downstream TRAF6-mediated activation of NF-kappa-B and MAPkinase pathways ultimately resulting in transcriptional activation of cytokines, chemokines, antimicrobial peptides and matrix metalloproteinases, with potential strong immune inflammation. IL17A-IL17F is primarily involved in host defense against extracellular bacteria and fungi by inducing neutrophilic inflammation. As signature effector cytokine of T-helper 17 cells (Th17), primarily induces neutrophil activation and recruitment at infection and inflammatory sites. Stimulates the production of antimicrobial beta-defensins DEFB1, DEFB103A, and DEFB104A by mucosal epithelial cells, limiting the entry of microbes through the epithelial barriers. IL17F homodimer can signal via IL17RC homodimeric receptor complex, triggering downstream activation of TRAF6 and NF-kappa-B signaling pathway. Via IL17RC induces transcriptional activation of IL33, a potent cytokine that stimulates group 2 innate lymphoid cells and adaptive T-helper 2 cells involved in pulmonary allergic response to fungi. Likely via IL17RC, promotes sympathetic innervation of peripheral organs by coordinating the communication between gamma-delta T cells and parenchymal cells. Stimulates sympathetic innervation of thermogenic adipose tissue by driving TGFB1 expression. Regulates the composition of intestinal microbiota and immune tolerance by inducing antimicrobial proteins that specifically control the growth of commensal Firmicutes and Bacteroidetes. The polypeptide is Interleukin-17F (IL17F) (Homo sapiens (Human)).